A 249-amino-acid chain; its full sequence is Ubiquinone/menaquinone biosynthesis C-methyltransferase UbiE (249 aa).

Residues T72, D93, and 121-122 contribute to the S-adenosyl-L-methionine site; that span reads DA.

It belongs to the class I-like SAM-binding methyltransferase superfamily. MenG/UbiE family.

It catalyses the reaction a 2-demethylmenaquinol + S-adenosyl-L-methionine = a menaquinol + S-adenosyl-L-homocysteine + H(+). The catalysed reaction is a 2-methoxy-6-(all-trans-polyprenyl)benzene-1,4-diol + S-adenosyl-L-methionine = a 5-methoxy-2-methyl-3-(all-trans-polyprenyl)benzene-1,4-diol + S-adenosyl-L-homocysteine + H(+). Its pathway is quinol/quinone metabolism; menaquinone biosynthesis; menaquinol from 1,4-dihydroxy-2-naphthoate: step 2/2. The protein operates within cofactor biosynthesis; ubiquinone biosynthesis. In terms of biological role, methyltransferase required for the conversion of demethylmenaquinol (DMKH2) to menaquinol (MKH2) and the conversion of 2-polyprenyl-6-methoxy-1,4-benzoquinol (DDMQH2) to 2-polyprenyl-3-methyl-6-methoxy-1,4-benzoquinol (DMQH2). This is Ubiquinone/menaquinone biosynthesis C-methyltransferase UbiE from Saccharophagus degradans (strain 2-40 / ATCC 43961 / DSM 17024).